The following is a 61-amino-acid chain: Metallothionein-1A (61 aa).

Position 1 is an N-acetylmethionine (M1). The beta stretch occupies residues 1–29 (MDPNCSCPTGGSCSCAGSCTCKACRCPSC). Residues C5, C7, C13, C15, C19, C21, C24, C26, C29, C33, C34, C36, C37, C41, C44, C48, C50, and C57 each contribute to the a divalent metal cation site. Residues 30–61 (KKSCCSCCPVGCAKCAQGCVCKGASDKCSCCA) form an alpha region. S58 is modified (phosphoserine). A divalent metal cation contacts are provided by C59 and C60.

This sequence belongs to the metallothionein superfamily. Type 1 family. As to quaternary structure, monomer.

Functionally, metallothioneins have a high content of cysteine residues that bind various heavy metals; these proteins are transcriptionally regulated by both heavy metals and glucocorticoids. This is Metallothionein-1A (MT1A) from Bos taurus (Bovine).